Consider the following 511-residue polypeptide: Sodium/proline symporter (511 aa).

Transmembrane regions (helical) follow at residues 16-36, 54-74, 85-105, 139-159, 175-195, 199-219, 246-266, 284-304, 327-347, 381-401, 407-427, 438-458, and 467-487; these read WQTY…GFYG, IGPY…WMIM, LSAI…YFVV, IISG…GFVS, GLLI…YLAV, DFFQ…VALL, VLGI…PHII, LGIS…LTGI, ILFH…AIMS, FVLI…TIAW, ILNL…PLVL, AGAI…ISWI, and FFGM…TYIV.

This sequence belongs to the sodium:solute symporter (SSF) (TC 2.A.21) family.

It is found in the cell membrane. The enzyme catalyses L-proline(in) + Na(+)(in) = L-proline(out) + Na(+)(out). In terms of biological role, catalyzes the sodium-dependent uptake of extracellular L-proline. This Staphylococcus epidermidis (strain ATCC 12228 / FDA PCI 1200) protein is Sodium/proline symporter (putP).